Reading from the N-terminus, the 455-residue chain is Bleomycin hydrolase (455 aa).

The residue at position 1 (methionine 1) is an N-acetylmethionine. Catalysis depends on residues cysteine 73 and histidine 372. Lysine 391 is modified (N6-acetyllysine). The active site involves asparagine 396.

This sequence belongs to the peptidase C1 family. As to quaternary structure, homohexamer. Interacts with NUDT12 (via ANK repeats).

It localises to the cytoplasm. Its subcellular location is the cytoplasmic granule. It catalyses the reaction Inactivates bleomycin B2 (a cytotoxic glycometallopeptide) by hydrolysis of a carboxyamide bond of beta-aminoalanine, but also shows general aminopeptidase activity. The specificity varies somewhat with source, but amino acid arylamides of Met, Leu and Ala are preferred.. The normal physiological role of BLM hydrolase is unknown, but it catalyzes the inactivation of the antitumor drug BLM (a glycopeptide) by hydrolyzing the carboxamide bond of its B-aminoalaninamide moiety thus protecting normal and malignant cells from BLM toxicity. This is Bleomycin hydrolase (Blmh) from Mus musculus (Mouse).